Here is a 386-residue protein sequence, read N- to C-terminus: Formate-dependent phosphoribosylglycinamide formyltransferase (386 aa).

N(1)-(5-phospho-beta-D-ribosyl)glycinamide-binding positions include 15-16 (EL) and Glu75. ATP is bound by residues Arg107, Lys148, 153-158 (SSGKGQ), 188-191 (EQFI), and Glu196. An ATP-grasp domain is found at 112 to 301 (ALAAQQLNLQ…EFELHLRAIV (190 aa)). Mg(2+) contacts are provided by Glu260 and Glu272. Residues Asp279, Lys349, and 356–357 (RR) each bind N(1)-(5-phospho-beta-D-ribosyl)glycinamide.

Belongs to the PurK/PurT family. In terms of assembly, homodimer.

The catalysed reaction is N(1)-(5-phospho-beta-D-ribosyl)glycinamide + formate + ATP = N(2)-formyl-N(1)-(5-phospho-beta-D-ribosyl)glycinamide + ADP + phosphate + H(+). It participates in purine metabolism; IMP biosynthesis via de novo pathway; N(2)-formyl-N(1)-(5-phospho-D-ribosyl)glycinamide from N(1)-(5-phospho-D-ribosyl)glycinamide (formate route): step 1/1. Functionally, involved in the de novo purine biosynthesis. Catalyzes the transfer of formate to 5-phospho-ribosyl-glycinamide (GAR), producing 5-phospho-ribosyl-N-formylglycinamide (FGAR). Formate is provided by PurU via hydrolysis of 10-formyl-tetrahydrofolate. The protein is Formate-dependent phosphoribosylglycinamide formyltransferase of Francisella tularensis subsp. novicida (strain U112).